The sequence spans 427 residues: MAVLIETTLGDLIIDLFVKERPRCSLNFLKLCKKKYYNLNQFHSIERNYVAQTGDPTGTGKGGESVYSDMYGEQGRYFEREDLPKMRHTRMGIVSFVNNGDNMLGSQFFITLGENLDYLDDQHTIFGQVTEGLETLEKLNEQLADTNNRPFKDIRISHTIVLDDPFDEDARISFPPRSPSPTYEMLVKTDQIALDEKEDEDEGKTAEEIAEELQQREMAEQAQILEMVGDLKDADEVPPENVLFVCKLNPVTTDEDLEIIFSRFGKINNCEIVRDRRSGDSLQYAFIEFDNAKSCEQAFFKMDNVLIDDRRIHVDFSQSVSQNYKYKPKSQQQEAPKRRQSPQRRPEVKRSHQRSPSPRRRRSPSPKKDKKRDYRREPARRRRSSDNHRDRDRSYRDNNRDRRDNHRDSDRDRRRHDRSPDRRRDRR.

Residues 6–161 form the PPIase cyclophilin-type domain; the sequence is ETTLGDLIID…KDIRISHTIV (156 aa). Residues 195–227 are a coiled coil; that stretch reads DEKEDEDEGKTAEEIAEELQQREMAEQAQILEM. Residues 241 to 319 enclose the RRM domain; sequence NVLFVCKLNP…RRIHVDFSQS (79 aa). Residues 322 to 334 show a composition bias toward polar residues; sequence QNYKYKPKSQQQE. The interval 322–427 is disordered; the sequence is QNYKYKPKSQ…RSPDRRRDRR (106 aa). Positions 351-370 are enriched in basic residues; sequence SHQRSPSPRRRRSPSPKKDK. The span at 384–427 shows a compositional bias: basic and acidic residues; sequence SSDNHRDRDRSYRDNNRDRRDNHRDSDRDRRRHDRSPDRRRDRR.

Belongs to the cyclophilin-type PPIase family. PPIL4 subfamily. As to quaternary structure, interacts with ama-1, the catalytic subunit of the RNA polymerase II (RNA pol II) complex. In terms of tissue distribution, ubiquitous.

The protein localises to the nucleus. It is found in the nucleoplasm. The protein resides in the chromosome. It carries out the reaction [protein]-peptidylproline (omega=180) = [protein]-peptidylproline (omega=0). Its function is as follows. Probable PPIase that accelerates the folding of proteins. It catalyzes the cis-trans isomerization of proline imidic peptide bonds in oligopeptides. Involved in RNA polymerase II (RNA pol II)-mediated transcription elongation, and in primary transcript splicing, including co-transcriptional trans-splicing, in association with the catalytic subunit of the RNA pol II complex ama-1. Also plays a role in the regulation of elongation-dependent phosphorylation of ama-1 to control transcription. Involved in the transcription of several genes during embryogenesis and in particular, of genes related to developmental processes such as gastrulation, and also regulates transcription in germ cells from embryogenesis to adulthood. The chain is Peptidyl-prolyl cis-trans isomerase sig-7 from Caenorhabditis elegans.